A 153-amino-acid polypeptide reads, in one-letter code: 6,7-dimethyl-8-ribityllumazine synthase (153 aa).

5-amino-6-(D-ribitylamino)uracil contacts are provided by residues F21, 55–57 (AFE), and 79–81 (TVI). 84 to 85 (AT) serves as a coordination point for (2S)-2-hydroxy-3-oxobutyl phosphate. Catalysis depends on H87, which acts as the Proton donor. A 5-amino-6-(D-ribitylamino)uracil-binding site is contributed by F112. (2S)-2-hydroxy-3-oxobutyl phosphate is bound at residue R126.

It belongs to the DMRL synthase family. Forms an icosahedral capsid composed of 60 subunits, arranged as a dodecamer of pentamers.

The enzyme catalyses (2S)-2-hydroxy-3-oxobutyl phosphate + 5-amino-6-(D-ribitylamino)uracil = 6,7-dimethyl-8-(1-D-ribityl)lumazine + phosphate + 2 H2O + H(+). Its pathway is cofactor biosynthesis; riboflavin biosynthesis; riboflavin from 2-hydroxy-3-oxobutyl phosphate and 5-amino-6-(D-ribitylamino)uracil: step 1/2. Its function is as follows. Catalyzes the formation of 6,7-dimethyl-8-ribityllumazine by condensation of 5-amino-6-(D-ribitylamino)uracil with 3,4-dihydroxy-2-butanone 4-phosphate. This is the penultimate step in the biosynthesis of riboflavin. This Bacillus cereus (strain G9842) protein is 6,7-dimethyl-8-ribityllumazine synthase.